The primary structure comprises 399 residues: S-adenosylmethionine synthase (399 aa).

Residue H17 coordinates ATP. Residue D19 coordinates Mg(2+). E45 contributes to the K(+) binding site. E58 and Q101 together coordinate L-methionine. The tract at residues 101–111 is flexible loop; sequence QSADIAMGVDQ. Residues 177 to 179, 244 to 245, D253, 259 to 260, A276, and K280 contribute to the ATP site; these read DGK, RF, and RK. Residue D253 coordinates L-methionine. Position 284 (K284) interacts with L-methionine.

This sequence belongs to the AdoMet synthase family. As to quaternary structure, homotetramer; dimer of dimers. Mg(2+) serves as cofactor. Requires K(+) as cofactor.

Its subcellular location is the cytoplasm. The catalysed reaction is L-methionine + ATP + H2O = S-adenosyl-L-methionine + phosphate + diphosphate. It functions in the pathway amino-acid biosynthesis; S-adenosyl-L-methionine biosynthesis; S-adenosyl-L-methionine from L-methionine: step 1/1. Its function is as follows. Catalyzes the formation of S-adenosylmethionine (AdoMet) from methionine and ATP. The overall synthetic reaction is composed of two sequential steps, AdoMet formation and the subsequent tripolyphosphate hydrolysis which occurs prior to release of AdoMet from the enzyme. In Bacillus cereus (strain G9842), this protein is S-adenosylmethionine synthase.